Here is a 461-residue protein sequence, read N- to C-terminus: tRNA-2-methylthio-N(6)-dimethylallyladenosine synthase (461 aa).

One can recognise an MTTase N-terminal domain in the interval Lys-18–Lys-134. Residues Cys-27, Cys-63, Cys-97, Cys-172, Cys-176, and Cys-179 each contribute to the [4Fe-4S] cluster site. Positions Cys-158–Glu-388 constitute a Radical SAM core domain. The 64-residue stretch at Lys-391 to Cys-454 folds into the TRAM domain.

It belongs to the methylthiotransferase family. MiaB subfamily. As to quaternary structure, monomer. It depends on [4Fe-4S] cluster as a cofactor.

Its subcellular location is the cytoplasm. The enzyme catalyses N(6)-dimethylallyladenosine(37) in tRNA + (sulfur carrier)-SH + AH2 + 2 S-adenosyl-L-methionine = 2-methylsulfanyl-N(6)-dimethylallyladenosine(37) in tRNA + (sulfur carrier)-H + 5'-deoxyadenosine + L-methionine + A + S-adenosyl-L-homocysteine + 2 H(+). Its function is as follows. Catalyzes the methylthiolation of N6-(dimethylallyl)adenosine (i(6)A), leading to the formation of 2-methylthio-N6-(dimethylallyl)adenosine (ms(2)i(6)A) at position 37 in tRNAs that read codons beginning with uridine. The sequence is that of tRNA-2-methylthio-N(6)-dimethylallyladenosine synthase from Syntrophus aciditrophicus (strain SB).